A 120-amino-acid chain; its full sequence is Large ribosomal subunit protein bL21 (120 aa).

This sequence belongs to the bacterial ribosomal protein bL21 family. As to quaternary structure, part of the 50S ribosomal subunit. Contacts protein L20.

In terms of biological role, this protein binds to 23S rRNA in the presence of protein L20. The sequence is that of Large ribosomal subunit protein bL21 from Roseiflexus sp. (strain RS-1).